Here is a 367-residue protein sequence, read N- to C-terminus: C-glycoside deglycosidase alpha subunit (367 aa).

Mg(2+) is bound at residue Glu146. His148 acts as the Proton acceptor in catalysis. Residues Asp178, His276, and Glu312 each contribute to the Mg(2+) site.

Belongs to the C-glycoside deglycosidase alpha subunit family. As to quaternary structure, heterodimer composed of an alpha subunit (CarB1) and a beta subunit (CarC1). It depends on Mg(2+) as a cofactor.

The enzyme catalyses 3''-dehydroisovitexin = 1,5-anhydro-D-erythro-hex-1-en-3-ulose + apigenin. Activity is strongly reduced in the presence of chelating agents. Carbon-carbon bond-cleaving enzyme which participates in the metabolism of C-glycosides. Acts on the C6-glycosylated compound 3''-dehydroisovitexin (3''-oxo-isovitexin). Shows weak activity with 3''-dehydroisoorientin (3''-oxo-homoorientin) and 3'-dehydromangiferin (3'-oxo-mangiferin). This Arthrobacter globiformis (strain ATCC 8010 / DSM 20124 / JCM 1332 / NBRC 12137 / NCIMB 8907 / NRRL B-2979 / 168) protein is C-glycoside deglycosidase alpha subunit.